The chain runs to 172 residues: Large ribosomal subunit protein uL22y (172 aa).

The protein belongs to the universal ribosomal protein uL22 family.

In Hordeum vulgare (Barley), this protein is Large ribosomal subunit protein uL22y.